The primary structure comprises 353 residues: 3'(2'),5'-bisphosphate nucleotidase 1 (353 aa).

The active-site Proton acceptor is the D46. Residues E71, D134, I136, and D137 each coordinate Mg(2+). T139 serves as the catalytic Proton acceptor. Adenosine 3',5'-bisphosphate contacts are provided by T139, H235, S259, K262, R276, and D288. Residues H235, S259, K262, R276, and D288 each coordinate AMP. D288 lines the Mg(2+) pocket.

This sequence belongs to the inositol monophosphatase superfamily. The cofactor is Mg(2+). As to expression, expressed in roots, leaves, stems, flowers and siliques.

It carries out the reaction 3'-phosphoadenylyl sulfate + H2O = adenosine 5'-phosphosulfate + phosphate. It catalyses the reaction adenosine 3',5'-bisphosphate + H2O = AMP + phosphate. The enzyme catalyses adenosine 2',5'-bisphosphate + H2O = AMP + phosphate. The catalysed reaction is 1D-myo-inositol 1,4-bisphosphate + H2O = 1D-myo-inositol 4-phosphate + phosphate. It carries out the reaction 1D-myo-inositol 1,3,4-trisphosphate + H2O = 1D-myo-inositol 3,4-bisphosphate + phosphate. It functions in the pathway signal transduction; phosphatidylinositol signaling pathway. Its activity is regulated as follows. Inhibited non-competitively by Li(+) (IC(50)=0.20 mM) and Na(+) (IC(50)=200 mM). Phosphatase that converts adenosine 3'-phosphate 5'-phosphosulfate (PAPS) to adenosine 5'-phosphosulfate (APS) and 3'(2')-phosphoadenosine 5'-phosphate (PAP) to AMP. May regulate the flux of sulfur in the sulfur-activation pathway by converting PAPS to APS. May play a role in the biosynthesis of sulfate conjugates and RNA processing. Is also able to hydrolyze inositol 1,4-bisphosphate and inositol 1,3,4-trisphosphate. Could be considered as a negative regulator of abscisic acid (ABA)- and stress-responsive genes, through modulating the inositol 1,4,5-trisphosphate (IP3) turnover. Is also involved in salt tolerance. Acts as a suppressor of virus- and transgene-induced silencing. The sequence is that of 3'(2'),5'-bisphosphate nucleotidase 1 from Arabidopsis thaliana (Mouse-ear cress).